We begin with the raw amino-acid sequence, 220 residues long: Outer membrane protein assembly factor BamD (220 aa).

Residues M1–G22 form the signal peptide. C23 carries N-palmitoyl cysteine lipidation. The S-diacylglycerol cysteine moiety is linked to residue C23.

It belongs to the BamD family. Part of the Bam complex.

Its subcellular location is the cell outer membrane. Its function is as follows. Part of the outer membrane protein assembly complex, which is involved in assembly and insertion of beta-barrel proteins into the outer membrane. This Helicobacter pylori (strain ATCC 700392 / 26695) (Campylobacter pylori) protein is Outer membrane protein assembly factor BamD.